The sequence spans 794 residues: Sucrose synthase (794 aa).

Residues 263-742 (MISRLLILSP…ALDRVASRYT (480 aa)) form a GT-B glycosyltransferase region.

It belongs to the glycosyltransferase 1 family. Homotetramer.

It carries out the reaction an NDP-alpha-D-glucose + D-fructose = a ribonucleoside 5'-diphosphate + sucrose + H(+). The catalysed reaction is ADP-alpha-D-glucose + D-fructose = sucrose + ADP + H(+). Inhibited by GDP over 10 mM and by over 2 mM MgCl(2). In terms of biological role, catalyzes the reversible conversion of sucrose and a nucleotide disphosphate (NDP) into fructose and NDP-glucose; although the reaction is freely reversible in vitro, the physiological reaction seems to be sucrose cleavage. Unlike characterized plant enzymes prefers ADP as a cosubstrate, whereas plants prefer UDP. The KM for sucrose is 8-fold lower in the presence of ADP than UDP. Its preference for ADP over UDP suggests it may directly link sucrose and glycogen metabolism. In Nitrosomonas europaea (strain ATCC 19718 / CIP 103999 / KCTC 2705 / NBRC 14298), this protein is Sucrose synthase (ss2).